A 400-amino-acid chain; its full sequence is DNA primase large subunit PriL (400 aa).

4 residues coordinate [4Fe-4S] cluster: Cys247, Cys356, Cys367, and Cys373.

It belongs to the eukaryotic-type primase large subunit family. Heterodimer of a small subunit (PriS) and a large subunit (PriL). The cofactor is [4Fe-4S] cluster.

Its function is as follows. Regulatory subunit of DNA primase, an RNA polymerase that catalyzes the synthesis of short RNA molecules used as primers for DNA polymerase during DNA replication. Stabilizes and modulates the activity of the small subunit, increasing the rate of DNA synthesis, and conferring RNA synthesis capability. The DNA polymerase activity may enable DNA primase to also catalyze primer extension after primer synthesis. May also play a role in DNA repair. The chain is DNA primase large subunit PriL from Thermococcus kodakarensis (strain ATCC BAA-918 / JCM 12380 / KOD1) (Pyrococcus kodakaraensis (strain KOD1)).